The sequence spans 1149 residues: Guanine nucleotide exchange factor DBS (1149 aa).

The region spanning 52-224 (AATASDEIMH…DLGGTLDYCH (173 aa)) is the CRAL-TRIO domain. The Spectrin repeat unit spans residues 351–456 (LQLRHFEQGF…VTRRRGLLSK (106 aa)). Phosphoserine occurs at positions 457, 462, 471, and 480. Positions 503–529 (LETGAENKIQELNEIYKEYECILNQDL) form a coiled coil. A disordered region spans residues 555 to 627 (KKLAAKQTRP…RTSSTGEEEE (73 aa)). Residues 583-594 (PGSWRSSENSSS) are compositionally biased toward low complexity. Residues 607–616 (AKSEMSEPRQ) are compositionally biased toward basic and acidic residues. Ser621 carries the post-translational modification Phosphoserine. Residue Thr622 is modified to Phosphothreonine. The DH domain maps to 632–812 (LRRHVMNELL…LGILKAVNDS (181 aa)). The PH domain maps to 841 to 950 (TDHKKGHTKV…IRKVLTSQLQ (110 aa)). Residues 956–1033 (SQHRALEQSH…EAPEEDGGWS (78 aa)) are disordered. The segment covering 966–978 (SLPLPTPSSTSPT) has biased composition (low complexity). Residues Ser1033, Ser1034, Ser1041, and Ser1042 each carry the phosphoserine modification. In terms of domain architecture, SH3 spans 1055–1116 (LVPGKYTVVM…PASSLSTLLG (62 aa)).

Belongs to the MCF2 family. In terms of assembly, interacts with GTP-bound RAC1. Interacts with CDC42. Interacts with RHOA. Interacts with CCPG1, which results in specific inhibition of its exchange activity toward RHOA, but does not affect its activity on CDC42. In terms of tissue distribution, expressed at low levels in several hemopoietic cell lines and in thymus and spleen, and at higher levels in other tissues, particularly in brain.

It localises to the cytoplasm. The protein resides in the cell membrane. Its function is as follows. Guanine nucleotide exchange factor that catalyzes guanine nucleotide exchange on RHOA and CDC42, and thereby contributes to the regulation of RHOA and CDC42 signaling pathways. Seems to lack activity with RAC1. Becomes activated and highly tumorigenic by truncation of the N-terminus. In Mus musculus (Mouse), this protein is Guanine nucleotide exchange factor DBS (Mcf2l).